The chain runs to 271 residues: Ubiquitin thioesterase OTUB1 (271 aa).

Ala-2 carries the N-acetylalanine modification. Ser-16 is modified (phosphoserine). At Tyr-26 the chain carries Phosphotyrosine. Residues 80–271 enclose the OTU domain; sequence SYIRKTRPDG…RPGHYDILYK (192 aa). Residue Asp-88 is part of the active site. Residue Cys-91 is the Nucleophile of the active site. 2 ubiquitin-conjugating enzyme E2 binding regions span residues 130 to 138 and 169 to 177; these read FTEFTIEDF and DYLVVYLRL. Residues 189–195 form a free ubiquitin binding region; that stretch reads FFEHFIE. Residues 206-213 form a ubiquitin-conjugating enzyme E2 binding region; sequence QEVEPMCK. Free ubiquitin binding regions lie at residues 214–221 and 245–251; these read ESDHIHII and NPHVFPE. His-265 is an active-site residue.

Belongs to the peptidase C65 family. Interacts with RNF128. Forms a ternary complex with RNF128 and USP8. Interacts with FUS and RACK1. Interacts with UBE2D1/UBCH5A, UBE2W/UBC16 and UBE2N/UBC13. Post-translationally, phosphorylation at Tyr-26 by SRC and SRMS promotes deubiquitination of RPTOR via a non-catalytic process.

It is found in the cytoplasm. It catalyses the reaction Thiol-dependent hydrolysis of ester, thioester, amide, peptide and isopeptide bonds formed by the C-terminal Gly of ubiquitin (a 76-residue protein attached to proteins as an intracellular targeting signal).. With respect to regulation, by free ubiquitin: binding of free ubiquitin triggers conformational changes in the OTU domain and formation of a ubiquitin-binding helix in the N-terminus, promoting binding of the conjugated donor ubiquitin in UBE2N/UBC13 to OTUB1. Hydrolase that can specifically remove compared to 'Lys-48'-linked conjugated ubiquitin from proteins and plays an important regulatory role at the level of protein turnover by preventing degradation. Regulator of T-cell anergy, a phenomenon that occurs when T-cells are rendered unresponsive to antigen rechallenge and no longer respond to their cognate antigen. Acts via its interaction with RNF128/GRAIL. Surprisingly, it regulates RNF128-mediated ubiquitination, but does not deubiquitinate polyubiquitinated RNF128. Deubiquitinates estrogen receptor alpha (ESR1). Mediates deubiquitination of 'Lys-48'-linked polyubiquitin chains, but not 'Lys-63'-linked polyubiquitin chains. Not able to cleave di-ubiquitin. Also capable of removing NEDD8 from NEDD8 conjugates, but with a much lower preference compared to 'Lys-48'-linked ubiquitin. Functionally, plays a key non-catalytic role in DNA repair regulation by inhibiting activity of RNF168, an E3 ubiquitin-protein ligase that promotes accumulation of 'Lys-63'-linked histone H2A and H2AX at DNA damage sites. Inhibits RNF168 independently of ubiquitin thioesterase activity by binding and inhibiting UBE2N/UBC13, the E2 partner of RNF168, thereby limiting spreading of 'Lys-63'-linked histone H2A and H2AX marks. Inhibition occurs by binding to free ubiquitin: free ubiquitin acts as an allosteric regulator that increases affinity for UBE2N/UBC13 and disrupts interaction with UBE2V1. The OTUB1-UBE2N/UBC13-free ubiquitin complex adopts a configuration that mimics a cleaved 'Lys48'-linked di-ubiquitin chain. Acts as a regulator of mTORC1 and mTORC2 complexes. When phosphorylated at Tyr-26, acts as an activator of the mTORC1 complex by mediating deubiquitination of RPTOR via a non-catalytic process: acts by binding and inhibiting the activity of the ubiquitin-conjugating enzyme E2 (UBE2D1/UBCH5A, UBE2W/UBC16 and UBE2N/UBC13), thereby preventing ubiquitination of RPTOR. Can also act as an inhibitor of the mTORC1 and mTORC2 complexes in response to amino acids by mediating non-catalytic deubiquitination of DEPTOR. The chain is Ubiquitin thioesterase OTUB1 (Otub1) from Mus musculus (Mouse).